The chain runs to 638 residues: Nitrous-oxide reductase (638 aa).

A signal peptide (tat-type signal) is located at residues 1-52 (MSDKDSKNTPQVPEKLGLSRRGFLGASAVTGAAVAATALGGAVMTRESWAQA). Cu cation contacts are provided by His-129, His-130, and His-178. Positions 256, 259, 267, 273, and 324 each coordinate Ca(2+). Residues His-326, His-382, and His-433 each coordinate Cu cation. Residues Lys-454 and Glu-469 each coordinate Ca(2+). Residues His-494, His-583, Cys-618, Trp-620, Cys-622, His-626, and Met-629 each contribute to the Cu cation site. Residues 542 to 638 (NKVRVYMTSM…MVGRMMVEPA (97 aa)) are COX2-like.

This sequence belongs to the NosZ family. The protein in the C-terminal section; belongs to the cytochrome c oxidase subunit 2 family. In terms of assembly, homodimer. It depends on Ca(2+) as a cofactor. The cofactor is Cu cation. Predicted to be exported by the Tat system. The position of the signal peptide cleavage has not been experimentally proven. In terms of processing, the N-terminus is blocked.

It is found in the periplasm. It catalyses the reaction N2 + 2 Fe(III)-[cytochrome c] + H2O = nitrous oxide + 2 Fe(II)-[cytochrome c] + 2 H(+). It participates in nitrogen metabolism; nitrate reduction (denitrification); dinitrogen from nitrate: step 4/4. Functionally, nitrous-oxide reductase is part of a bacterial respiratory system which is activated under anaerobic conditions in the presence of nitrate or nitrous oxide. The chain is Nitrous-oxide reductase (nosZ) from Stutzerimonas stutzeri (Pseudomonas stutzeri).